Here is a 419-residue protein sequence, read N- to C-terminus: CinA-like protein (419 aa).

Belongs to the CinA family.

The chain is CinA-like protein from Acaryochloris marina (strain MBIC 11017).